The primary structure comprises 454 residues: MKISLTNRVRTTIRERKLFREGDRLVLVALSGGADSVALLCVLRELGYETVAAHCNFHLRGVESDEDAAFVERLCRDLDVPLHRIDFDTVRYARERSISIEMAARELRYEWFGQLRKELAIEYVAVAHHADDNAETMVLNLCRGTGISGLCGMPYKRNDGIVRPLLDATRDEIEAYLLDQKITYRTDSSNEDTRFRRNLVRHRIMPLLKELNPSLQEALLRTRENLEGVAAFYSKATEDFHNTLRATSSISIREVKETPAPFTLLYDLLHPYGFNRDQIREVATSLDNPPGASFFSSSHRLLRERDRLTVLPLSPKMEVPELFGLKIGDSFLDLPDGKQLSWQRGTPADLDLEGLRLPNTKLLLPLAFVESLQEELGVRRPQRGDHIHPYGMKGCKTVSRFFIDRHVPRSRREEAWLLCQGTEVVWIMGYAADRRFAIDELSDTEEYLLFSFGL.

An ATP-binding site is contributed by 31 to 36 (SGGADS).

This sequence belongs to the tRNA(Ile)-lysidine synthase family.

It localises to the cytoplasm. The enzyme catalyses cytidine(34) in tRNA(Ile2) + L-lysine + ATP = lysidine(34) in tRNA(Ile2) + AMP + diphosphate + H(+). Ligates lysine onto the cytidine present at position 34 of the AUA codon-specific tRNA(Ile) that contains the anticodon CAU, in an ATP-dependent manner. Cytidine is converted to lysidine, thus changing the amino acid specificity of the tRNA from methionine to isoleucine. This chain is tRNA(Ile)-lysidine synthase, found in Porphyromonas gingivalis (strain ATCC BAA-308 / W83).